Reading from the N-terminus, the 510-residue chain is Bifunctional pantoate ligase/cytidylate kinase (510 aa).

Residues 1–276 (MKKVIIRKTE…CGETRLIDHV (276 aa)) form a pantoate--beta-alanine ligase region. 29–36 (MGNLHNGH) lines the ATP pocket. Residue His36 is the Proton donor of the active site. Position 61 (Gln61) interacts with (R)-pantoate. Gln61 contributes to the beta-alanine binding site. ATP is bound at residue 150-153 (GEKD). Gln156 lines the (R)-pantoate pocket. Residue 187 to 190 (LSSR) coordinates ATP. The tract at residues 277 to 510 (FLMKRRPIIA…DKIPKETEIK (234 aa)) is cytidylate kinase.

In the N-terminal section; belongs to the pantothenate synthetase family. The protein in the C-terminal section; belongs to the cytidylate kinase family. Type 1 subfamily.

The protein resides in the cytoplasm. It catalyses the reaction (R)-pantoate + beta-alanine + ATP = (R)-pantothenate + AMP + diphosphate + H(+). The catalysed reaction is CMP + ATP = CDP + ADP. It carries out the reaction dCMP + ATP = dCDP + ADP. It functions in the pathway cofactor biosynthesis; (R)-pantothenate biosynthesis; (R)-pantothenate from (R)-pantoate and beta-alanine: step 1/1. Catalyzes the condensation of pantoate with beta-alanine in an ATP-dependent reaction via a pantoyl-adenylate intermediate. Its function is as follows. Catalyzes the transfer of a phosphate group from ATP to either CMP or dCMP to form CDP or dCDP and ADP, respectively. The chain is Bifunctional pantoate ligase/cytidylate kinase from Prochlorococcus marinus (strain MIT 9215).